A 116-amino-acid chain; its full sequence is NADH-ubiquinone oxidoreductase chain 3 (116 aa).

A run of 3 helical transmembrane segments spans residues 3-23 (LITTIITITITLSAVLATISF), 56-76 (FFLIAILFLLFDLEIALLLPL), and 87-107 (LTLIWSTAVLALLTLGLIYEW).

It belongs to the complex I subunit 3 family.

The protein resides in the mitochondrion membrane. It carries out the reaction a ubiquinone + NADH + 5 H(+)(in) = a ubiquinol + NAD(+) + 4 H(+)(out). In terms of biological role, core subunit of the mitochondrial membrane respiratory chain NADH dehydrogenase (Complex I) that is believed to belong to the minimal assembly required for catalysis. Complex I functions in the transfer of electrons from NADH to the respiratory chain. The immediate electron acceptor for the enzyme is believed to be ubiquinone. The polypeptide is NADH-ubiquinone oxidoreductase chain 3 (MT-ND3) (Oncorhynchus keta (Chum salmon)).